The sequence spans 103 residues: Small ribosomal subunit protein uS10 (103 aa).

Belongs to the universal ribosomal protein uS10 family. In terms of assembly, part of the 30S ribosomal subunit.

Functionally, involved in the binding of tRNA to the ribosomes. In Ruminiclostridium cellulolyticum (strain ATCC 35319 / DSM 5812 / JCM 6584 / H10) (Clostridium cellulolyticum), this protein is Small ribosomal subunit protein uS10.